Here is a 358-residue protein sequence, read N- to C-terminus: Trans-enoyl reductase milB (358 aa).

NADP(+) is bound by residues 48-51 (VDTK), 170-173 (ATAT), 193-196 (SAKH), Y211, 258-259 (LD), and 349-350 (VR).

The protein belongs to the zinc-containing alcohol dehydrogenase family. Monomer.

The enzyme catalyses 10 malonyl-CoA + acetyl-CoA + 3 AH2 + 8 NADPH + 18 H(+) = cordypyrone A + 3 A + 10 CO2 + 8 NADP(+) + 11 CoA + 8 H2O. It participates in secondary metabolite biosynthesis. Its function is as follows. Trans-enoyl reductase; part of the gene cluster that mediates the biosynthesis of cordypyrones A and B, 2 pyrones that show modest activities against pathogenic bacteria including methicillin-resistant Staphylococcus aureus (MRSA), Mycobacterium tuberculosis and Bacillus cereus. The HR-PKS milA catalyzes the formation of cordypyrones A via condensation of one acetate with 10 malonate units. Since milA lacks an enoyl reductase domain, the 2 beta-keto processing domains DH and KR of milA collaborate with the trans-enoyl reductase milB to catalyze the different levels of reduction. The cytochrome P450 monooxygenase milC then hydroxylates the C-22 of cordypyrones A to yield cordypyrones B. This chain is Trans-enoyl reductase milB, found in Cordyceps militaris (strain CM01) (Caterpillar fungus).